The chain runs to 251 residues: Ribosomal RNA small subunit methyltransferase G (251 aa).

S-adenosyl-L-methionine is bound by residues Gly74, Phe79, 125–126 (AE), and Arg144. Residues 224–251 (RPAGLPTQHPLGAIEGAPRVESEEPEEP) form a disordered region.

It belongs to the methyltransferase superfamily. RNA methyltransferase RsmG family.

Its subcellular location is the cytoplasm. Its function is as follows. Specifically methylates the N7 position of a guanine in 16S rRNA. The polypeptide is Ribosomal RNA small subunit methyltransferase G (Gloeobacter violaceus (strain ATCC 29082 / PCC 7421)).